The sequence spans 275 residues: Large ribosomal subunit protein uL2 (275 aa).

Residues 222-257 form a disordered region; sequence GTAMNAVDHPHGGGRGRSKGNNQPRSPWNQPAKGFK. Polar residues predominate over residues 240 to 250; that stretch reads KGNNQPRSPWN.

Belongs to the universal ribosomal protein uL2 family. As to quaternary structure, part of the 50S ribosomal subunit. Forms a bridge to the 30S subunit in the 70S ribosome.

Its function is as follows. One of the primary rRNA binding proteins. Required for association of the 30S and 50S subunits to form the 70S ribosome, for tRNA binding and peptide bond formation. It has been suggested to have peptidyltransferase activity; this is somewhat controversial. Makes several contacts with the 16S rRNA in the 70S ribosome. The chain is Large ribosomal subunit protein uL2 from Endomicrobium trichonymphae.